The sequence spans 429 residues: Serine--tRNA ligase (429 aa).

Thr236 to Glu238 contributes to the L-serine binding site. Residue Arg267–Glu269 coordinates ATP. Glu290 is a binding site for L-serine. Residue Glu354–Ser357 coordinates ATP. Ser390 contacts L-serine.

It belongs to the class-II aminoacyl-tRNA synthetase family. Type-1 seryl-tRNA synthetase subfamily. Homodimer. The tRNA molecule binds across the dimer.

It localises to the cytoplasm. The enzyme catalyses tRNA(Ser) + L-serine + ATP = L-seryl-tRNA(Ser) + AMP + diphosphate + H(+). The catalysed reaction is tRNA(Sec) + L-serine + ATP = L-seryl-tRNA(Sec) + AMP + diphosphate + H(+). It functions in the pathway aminoacyl-tRNA biosynthesis; selenocysteinyl-tRNA(Sec) biosynthesis; L-seryl-tRNA(Sec) from L-serine and tRNA(Sec): step 1/1. In terms of biological role, catalyzes the attachment of serine to tRNA(Ser). Is also able to aminoacylate tRNA(Sec) with serine, to form the misacylated tRNA L-seryl-tRNA(Sec), which will be further converted into selenocysteinyl-tRNA(Sec). This Wigglesworthia glossinidia brevipalpis protein is Serine--tRNA ligase.